The sequence spans 224 residues: Peptidyl-prolyl cis-trans isomerase FKBP3 (224 aa).

The residue at position 2 (Ala-2) is an N-acetylalanine. Ser-36 carries the phosphoserine modification. A compositionally biased stretch (basic and acidic residues) spans 89–102 (KLNEDKPKETKSEE). Residues 89 to 113 (KLNEDKPKETKSEETLDEGPPKYTK) form a disordered region. The residue at position 99 (Lys-99) is an N6-acetyllysine. Residues 128–224 (GDVVHCWYTG…IFEVELVDID (97 aa)) enclose the PPIase FKBP-type domain. Ser-152 is subject to Phosphoserine. Lys-170 is subject to N6-acetyllysine.

It belongs to the FKBP-type PPIase family.

The protein resides in the nucleus. The catalysed reaction is [protein]-peptidylproline (omega=180) = [protein]-peptidylproline (omega=0). Inhibited preferentially by rapamycin over FK506. In terms of biological role, FK506- and rapamycin-binding proteins (FKBPs) constitute a family of receptors for the two immunosuppressants which inhibit T-cell proliferation by arresting two dinstinct cytoplasmic signal transmission pathways. PPIases accelerate the folding of proteins. This Bos taurus (Bovine) protein is Peptidyl-prolyl cis-trans isomerase FKBP3 (FKBP3).